A 253-amino-acid polypeptide reads, in one-letter code: Indole-3-glycerol phosphate synthase (253 aa).

Belongs to the TrpC family.

It catalyses the reaction 1-(2-carboxyphenylamino)-1-deoxy-D-ribulose 5-phosphate + H(+) = (1S,2R)-1-C-(indol-3-yl)glycerol 3-phosphate + CO2 + H2O. Its pathway is amino-acid biosynthesis; L-tryptophan biosynthesis; L-tryptophan from chorismate: step 4/5. The protein is Indole-3-glycerol phosphate synthase of Bacillus thuringiensis (strain Al Hakam).